The sequence spans 188 residues: Elongation factor P (188 aa).

Lys34 bears the N6-(3,6-diaminohexanoyl)-5-hydroxylysine mark.

The protein belongs to the elongation factor P family. In terms of processing, may be beta-lysylated on the epsilon-amino group of Lys-34 by the combined action of EpmA and EpmB, and then hydroxylated on the C5 position of the same residue by EpmC (if this protein is present). Lysylation is critical for the stimulatory effect of EF-P on peptide-bond formation. The lysylation moiety may extend toward the peptidyltransferase center and stabilize the terminal 3-CCA end of the tRNA. Hydroxylation of the C5 position on Lys-34 may allow additional potential stabilizing hydrogen-bond interactions with the P-tRNA.

It localises to the cytoplasm. It functions in the pathway protein biosynthesis; polypeptide chain elongation. Its function is as follows. Involved in peptide bond synthesis. Alleviates ribosome stalling that occurs when 3 or more consecutive Pro residues or the sequence PPG is present in a protein, possibly by augmenting the peptidyl transferase activity of the ribosome. Modification of Lys-34 is required for alleviation. This chain is Elongation factor P, found in Photobacterium profundum (strain SS9).